A 1023-amino-acid polypeptide reads, in one-letter code: Cell division cycle-associated protein 2 (1023 aa).

Over residues M1 to E14 the composition is skewed to basic and acidic residues. The disordered stretch occupies residues M1 to G21. S98, S120, S126, S131, S210, S291, and S309 each carry phosphoserine. T312 is subject to Phosphothreonine. The PP1-binding domain occupies K389–D449. Phosphoserine is present on residues S400 and S407. T412 is modified (phosphothreonine). S437 carries the post-translational modification Phosphoserine. The disordered stretch occupies residues S542 to E580. Positions S561 to V573 are enriched in basic residues. Phosphoserine occurs at positions 591 and 614. The disordered stretch occupies residues S667–P729. The span at N679–I691 shows a compositional bias: low complexity. Over residues N696 to A706 the composition is skewed to basic and acidic residues. Phosphoserine occurs at positions 710 and 756. K762 participates in a covalent cross-link: Glycyl lysine isopeptide (Lys-Gly) (interchain with G-Cter in SUMO2). Basic and acidic residues predominate over residues E803–M816. Disordered stretches follow at residues E803–V860 and S936–Q1023. A phosphoserine mark is found at S936 and S977. Polar residues-rich tracts occupy residues C979–F992 and S1000–T1010. A Phosphoserine modification is found at S1000. Residues E1013–Q1023 are compositionally biased toward basic and acidic residues.

As to quaternary structure, interacts with PPP1CC. Phosphorylated by CDK1. May regulate its subcellular location. In terms of tissue distribution, ubiquitously expressed.

The protein localises to the nucleus. In terms of biological role, regulator of chromosome structure during mitosis required for condensin-depleted chromosomes to retain their compact architecture through anaphase. Acts by mediating the recruitment of phopsphatase PP1-gamma subunit (PPP1CC) to chromatin at anaphase and into the following interphase. At anaphase onset, its association with chromatin targets a pool of PPP1CC to dephosphorylate substrates. The protein is Cell division cycle-associated protein 2 (CDCA2) of Homo sapiens (Human).